The following is a 68-amino-acid chain: Large ribosomal subunit protein uL29 (68 aa).

Belongs to the universal ribosomal protein uL29 family.

This is Large ribosomal subunit protein uL29 from Picosynechococcus sp. (strain ATCC 27264 / PCC 7002 / PR-6) (Agmenellum quadruplicatum).